Here is a 946-residue protein sequence, read N- to C-terminus: DNA primase (946 aa).

Residues 596-626 (RDTEEDEDGKEDKNNVPGNGVFQKTTSSVDT) are disordered. Residues 617–626 (FQKTTSSVDT) are compositionally biased toward polar residues. The CHC2-type zinc finger occupies 881 to 920 (CLNYTHRNPQETVQVFIDLRTEHSYALWASLWSRCFTKKC).

Belongs to the herpesviridae DNA primase family. In terms of assembly, associates with the helicase and the primase-associated factor to form the helicase-primase factor.

Its subcellular location is the host nucleus. Essential component of the helicase/primase complex. Unwinds the DNA at the replication forks and generates single-stranded DNA for both leading and lagging strand synthesis. The primase initiates primer synthesis and thereby produces large amount of short RNA primers on the lagging strand that the polymerase elongates using dNTPs. This is DNA primase (UL70) from Human cytomegalovirus (strain Merlin) (HHV-5).